Reading from the N-terminus, the 185-residue chain is Elongation factor P (185 aa).

This sequence belongs to the elongation factor P family.

It localises to the cytoplasm. Its pathway is protein biosynthesis; polypeptide chain elongation. In terms of biological role, involved in peptide bond synthesis. Stimulates efficient translation and peptide-bond synthesis on native or reconstituted 70S ribosomes in vitro. Probably functions indirectly by altering the affinity of the ribosome for aminoacyl-tRNA, thus increasing their reactivity as acceptors for peptidyl transferase. The sequence is that of Elongation factor P from Aromatoleum aromaticum (strain DSM 19018 / LMG 30748 / EbN1) (Azoarcus sp. (strain EbN1)).